The primary structure comprises 258 residues: Type III pantothenate kinase (258 aa).

7–14 (DVGNTRLK) contributes to the ATP binding site. Substrate-binding positions include Y96 and 103-106 (GADR). Catalysis depends on D105, which acts as the Proton acceptor. T133 contributes to the ATP binding site. T183 provides a ligand contact to substrate.

It belongs to the type III pantothenate kinase family. Homodimer. NH4(+) serves as cofactor. Requires K(+) as cofactor.

The protein localises to the cytoplasm. It catalyses the reaction (R)-pantothenate + ATP = (R)-4'-phosphopantothenate + ADP + H(+). It participates in cofactor biosynthesis; coenzyme A biosynthesis; CoA from (R)-pantothenate: step 1/5. Functionally, catalyzes the phosphorylation of pantothenate (Pan), the first step in CoA biosynthesis. The polypeptide is Type III pantothenate kinase (Acidovorax ebreus (strain TPSY) (Diaphorobacter sp. (strain TPSY))).